We begin with the raw amino-acid sequence, 908 residues long: MFGKLLTKVFGSRNDRTLKGLQKIVISINALEADYEKLTDEALKAKTAEFRERLAAGASLDSIMAEAFATVREASKRVFDMRHFDVQLLGGMVLDSNRIAEMRTGEGKTLTATLPAYLNALTGKGVHVITVNDYLARRDAENNRPLFEFLGLTVGINVAGLGQHEKKAAYNADITYGTNNEFGFDYLRDNMAFSPQERVQRPLHYALIDEVDSILIDEARTPLIISGAAEDSSELYIKINTLIPNLIRQDKEDTEEYVGEGDYSIDEKAKQVHFTERGQEKVENLLIERGMLAEGDSLYSAANISLLHHVNAALRAHTLFERDVDYIVQDNEVIIVDEHTGRTMPGRRWSEGLHQAVEAKEGVHIQNENQTLASITFQNYFRQYEKLAGMTGTADTEAFEFQHIYGLDTVVVPTNRPMVRKDMADLVYLTADEKYQAIIKDIKDCRERGQPVLVGTVSIEQSELLARLMVQEKIPHEVLNAKFHEREAEIVAQAGRTGSVTIATNMAGRGTDIVLGGNWNMEIDELDNPTAEQKAKIKADWQIRHDEVVAAGGLHILGTERHESRRIDNQLRGRAGRQGDAGSSRFYLSMEDSLMRIFASDRVSGMMKKLGMEEGEAIEHPWVSRAIENAQRKVEARNFDIRKQLLEFDDVANDQRQVVYAQRNELMDAESIEDTIQNIQDDVIGAVIDQYIPPQSVEELWDIPGLEQRLHQEFMLKLPIQEWLDKEDDLHEESLRERIITAWGDAYKAKEEMVGAQVLRQFEKAVMLQTLDGLWKEHLAAMDHLRQGIHLRGYAQKNPKQEYKRESFELFQQLLNTLKHDVISVLSKVQVQAQSDVEEMEARRREEDAKIQRDYQHAAAESLVGGGDEHEAVTAQAPMIRDGEKVGRNDPCPCGSGRKYKQCHGKLS.

Residues Gln87, 105–109 (GEGKT), and Asp512 contribute to the ATP site. The interval 876 to 908 (QAPMIRDGEKVGRNDPCPCGSGRKYKQCHGKLS) is disordered. Zn(2+) contacts are provided by Cys892, Cys894, Cys903, and His904. Over residues 898-908 (RKYKQCHGKLS) the composition is skewed to basic residues.

This sequence belongs to the SecA family. In terms of assembly, monomer and homodimer. Part of the essential Sec protein translocation apparatus which comprises SecA, SecYEG and auxiliary proteins SecDF-YajC and YidC. Zn(2+) is required as a cofactor.

The protein localises to the cell inner membrane. The protein resides in the cytoplasm. It carries out the reaction ATP + H2O + cellular proteinSide 1 = ADP + phosphate + cellular proteinSide 2.. Functionally, part of the Sec protein translocase complex. Interacts with the SecYEG preprotein conducting channel. Has a central role in coupling the hydrolysis of ATP to the transfer of proteins into and across the cell membrane, serving both as a receptor for the preprotein-SecB complex and as an ATP-driven molecular motor driving the stepwise translocation of polypeptide chains across the membrane. This is Protein translocase subunit SecA from Shewanella baltica (strain OS185).